The following is a 915-amino-acid chain: WD repeat-containing protein 44 (915 aa).

A compositionally biased stretch (acidic residues) spans 1–14 (MASESDTEEFYDAP). The tract at residues 1-24 (MASESDTEEFYDAPEDVHLGTGYP) is disordered. Position 2 is an N-acetylalanine (alanine 2). Residues 2–173 (ASESDTEEFY…SSGEQLDASG (172 aa)) are binding activity. Serine 3 is modified (phosphoserine). Residues 9 to 15 (EFYDAPE) carry the FFAT-like motif motif. Tyrosine 11 is modified (phosphotyrosine). Residues serine 27, serine 50, serine 66, serine 71, serine 81, and serine 126 each carry the phosphoserine modification. 3 disordered regions span residues 79-102 (DDSL…VAGT), 117-174 (LQQD…ASGL), and 208-282 (VEEV…PKEN). Positions 114–139 (EHELQQDSEKAESQNVAEESELETQK) form a coiled coil. The span at 146–155 (TCEKSEKTVD) shows a compositional bias: basic and acidic residues. Threonine 161 and threonine 221 each carry phosphothreonine. The tract at residues 213-259 (PAKPPRHLTPEPDIVASTKKPVPARPPPPTNFPPPRPPPPSRPAPPP) is important for interaction with ARHGAP26 AND ARHGAP10. Residues 235-258 (PARPPPPTNFPPPRPPPPSRPAPP) are compositionally biased toward pro residues. Serine 264 carries the post-translational modification Phosphoserine. Over residues 264 to 280 (SELEFEALKTPDLDVPK) the composition is skewed to basic and acidic residues. Threonine 273 carries the phosphothreonine modification. Residues 336–349 (VMGPQRPRSNSGRE) are important for interaction with RAB11A. 2 positions are modified to phosphoserine: serine 344 and serine 346. Residues threonine 351 and threonine 403 each carry the phosphothreonine modification. 2 disordered regions span residues 399 to 425 (SNDA…RLKQ) and 461 to 481 (DEVF…GMPY). A phosphoserine mark is found at serine 405, serine 472, serine 473, and serine 474. Acidic residues predominate over residues 469–478 (DDPSSSDDEG). Tyrosine 481 carries the phosphotyrosine modification. Residues 511–550 (EHMGAVWTMKFSHCGRLLASAGQDNIVRIWALKNAFDYFN) form a WD 1 repeat. The tract at residues 559-593 (EGRVSPSPSQESLSSSKSDTDMGVCSGTDEDPDDK) is disordered. Residues serine 563 and serine 567 each carry the phosphoserine modification. The segment covering 563 to 575 (SPSPSQESLSSSK) has biased composition (low complexity). 7 WD repeats span residues 607–645 (GHTA…CLCC), 647–687 (QHID…VALW), 692–731 (GQTK…YHTQ), 742–781 (KVGR…LSMK), 786–825 (VNSS…SKFT), 840–880 (AHNA…EVLD), and 882–915 (TSTG…KTVS).

As to quaternary structure, interacts with the GTP-bound form of RAB11 when membrane-associated. Interacts with GRAF1/ARHGAP26 or GRAF2/ARHGAP10; the interaction connects the endoplasmic reticulum (ER) with the endosomal tubule. Interacts (via FFAT-like motif) with VAPA (via MSP domain) or VAPB (via MSP domain); the interaction connects the ER with the endosomal tubule. Does not bind to other Rab and Rho small G proteins. Post-translationally, phosphorylated by ATK1; the phosphorylation stabilizes its interaction with RAB11A and RAB11B.

It is found in the cytoplasm. The protein resides in the cytosol. It localises to the perinuclear region. The protein localises to the endosome membrane. Its subcellular location is the golgi apparatus. It is found in the trans-Golgi network. Functionally, downstream effector for Rab11 which regulates Rab11 intracellular membrane trafficking functions such as endocytic recycling, intracellular ciliogenesis and protein export. ATK1-mediated phosphorylation of WDR44 induces binding to Rab11 which activates endocytic recycling of transferrin receptor back to the plasma membrane. When bound to Rab11, prevents the formation of the ciliogenic Rab11-Rabin8/RAB3IP-RAB11FIP3 complex, therefore inhibiting preciliary trafficking and ciliogenesis. Participates in neo-synthesized protein export by connecting the endoplasmic reticulum (ER) with the endosomal tubule via direct interactions with the integral ER proteins VAPA or VAPB and the endosomal protein GRAFs (GRAF1/ARHGAP26 or GRAF2/ARHGAP10), which facilitates the transfer of proteins such as E-cadherin, MPP14 and CFTR into a Rab8-Rab10-Rab11-dependent export route. The sequence is that of WD repeat-containing protein 44 from Mus musculus (Mouse).